Here is a 216-residue protein sequence, read N- to C-terminus: uncharacterized protein (216 aa).

An Integrase catalytic domain is found at 54-215 (TATQPNEKWT…SPVNYRTQSL (162 aa)).

The protein belongs to the transposase IS3/IS150/IS904 family.

This is an uncharacterized protein from Haemophilus influenzae (strain ATCC 51907 / DSM 11121 / KW20 / Rd).